The chain runs to 144 residues: Large ribosomal subunit protein uL15 (144 aa).

Residues 20 to 49 (GRGIGSGLGKTGGRGHKGQKSRSGGFHKVG) form a disordered region. Residues 21-31 (RGIGSGLGKTG) show a composition bias toward gly residues.

The protein belongs to the universal ribosomal protein uL15 family. Part of the 50S ribosomal subunit.

Binds to the 23S rRNA. The chain is Large ribosomal subunit protein uL15 from Neisseria meningitidis serogroup A / serotype 4A (strain DSM 15465 / Z2491).